Consider the following 354-residue polypeptide: Yop proteins translocation protein U (354 aa).

A disordered region spans residues 1-20 (MSGEKTEQPTPKKIRDARKK). A run of 5 helical transmembrane segments spans residues 30–50 (VSTA…DYYF), 79–99 (VLLE…LMAI), 138–158 (VEFL…WIII), 163–183 (VTLL…LGQI), and 187–207 (LMVI…AFEY).

Belongs to the type III secretion exporter family.

It is found in the cell membrane. Its function is as follows. Component of the yop secretion machinery. This Yersinia pestis protein is Yop proteins translocation protein U (yscU).